The following is a 347-amino-acid chain: Protein RecA (347 aa).

Residue 64–71 (GPESSGKT) participates in ATP binding. The tract at residues 328–347 (DKVDEDKTEEEASQESLDLK) is disordered.

The protein belongs to the RecA family.

It localises to the cytoplasm. Its function is as follows. Can catalyze the hydrolysis of ATP in the presence of single-stranded DNA, the ATP-dependent uptake of single-stranded DNA by duplex DNA, and the ATP-dependent hybridization of homologous single-stranded DNAs. It interacts with LexA causing its activation and leading to its autocatalytic cleavage. In Oceanobacillus iheyensis (strain DSM 14371 / CIP 107618 / JCM 11309 / KCTC 3954 / HTE831), this protein is Protein RecA.